The chain runs to 444 residues: tRNA modification GTPase MnmE (444 aa).

3 residues coordinate (6S)-5-formyl-5,6,7,8-tetrahydrofolate: R28, E86, and R126. A TrmE-type G domain is found at 224 to 368; that stretch reads GFCVVLAGAP…LLDAIQGSAA (145 aa). N234 contributes to the K(+) binding site. Residues 234–239, 253–259, and 278–281 contribute to the GTP site; these read NAGKST, SDIPGTT, and DTAG. S238 is a Mg(2+) binding site. K(+)-binding residues include S253, I255, and T258. T259 is a Mg(2+) binding site. K444 lines the (6S)-5-formyl-5,6,7,8-tetrahydrofolate pocket.

This sequence belongs to the TRAFAC class TrmE-Era-EngA-EngB-Septin-like GTPase superfamily. TrmE GTPase family. In terms of assembly, homodimer. Heterotetramer of two MnmE and two MnmG subunits. The cofactor is K(+).

Its subcellular location is the cytoplasm. Its function is as follows. Exhibits a very high intrinsic GTPase hydrolysis rate. Involved in the addition of a carboxymethylaminomethyl (cmnm) group at the wobble position (U34) of certain tRNAs, forming tRNA-cmnm(5)s(2)U34. In Methylorubrum populi (strain ATCC BAA-705 / NCIMB 13946 / BJ001) (Methylobacterium populi), this protein is tRNA modification GTPase MnmE.